We begin with the raw amino-acid sequence, 342 residues long: Farnesyl pyrophosphate synthase 1 (342 aa).

Isopentenyl diphosphate-binding residues include Lys-47, Arg-50, and Gln-86. Mg(2+)-binding residues include Asp-93 and Asp-97. Position 102 (Arg-102) interacts with dimethylallyl diphosphate. Isopentenyl diphosphate is bound at residue Arg-103. 5 residues coordinate dimethylallyl diphosphate: Lys-190, Thr-191, Gln-229, Lys-246, and Lys-255.

Belongs to the FPP/GGPP synthase family. Requires Mg(2+) as cofactor.

The protein resides in the cytoplasm. The enzyme catalyses isopentenyl diphosphate + dimethylallyl diphosphate = (2E)-geranyl diphosphate + diphosphate. It carries out the reaction isopentenyl diphosphate + (2E)-geranyl diphosphate = (2E,6E)-farnesyl diphosphate + diphosphate. It functions in the pathway isoprenoid biosynthesis; farnesyl diphosphate biosynthesis; farnesyl diphosphate from geranyl diphosphate and isopentenyl diphosphate: step 1/1. It participates in isoprenoid biosynthesis; geranyl diphosphate biosynthesis; geranyl diphosphate from dimethylallyl diphosphate and isopentenyl diphosphate: step 1/1. Catalyzes the sequential condensation of isopentenyl pyrophosphate with the allylic pyrophosphates, dimethylallyl pyrophosphate, and then with the resultant geranylpyrophosphate to the ultimate product farnesyl pyrophosphate. The protein is Farnesyl pyrophosphate synthase 1 (FPS1) of Lupinus albus (White lupine).